The following is a 1826-amino-acid chain: Protein TIC 214 (1826 aa).

5 consecutive transmembrane segments (helical) span residues 18–38 (IINS…FSIG), 67–87 (FITG…HLAL), 127–147 (LSIQ…HFIL), 175–195 (VGWL…LVWI), and 221–241 (IFSI…PSPI). The tract at residues 250–308 (TEEGWESEEETDVEIETASETKGTKQEQEGSTEEDPSPSLFSEEKEDPDKIDETEEIRV) is disordered. Composition is skewed to acidic residues over residues 252-266 (EGWE…EIET) and 293-304 (EKEDPDKIDETE). Residues 774–794 (LILIIQSIFRKYILLPSLIIV) form a helical membrane-spanning segment. The disordered stretch occupies residues 1032–1057 (TKGLMKEKNSNAKKRGSPNKTSFNRK). Residues 1042-1057 (NAKKRGSPNKTSFNRK) are compositionally biased toward basic residues. A helical transmembrane segment spans residues 1081 to 1101 (FYLFITIFIKRIYIDIFVCII).

The protein belongs to the TIC214 family. As to quaternary structure, part of the Tic complex.

The protein localises to the plastid. It is found in the chloroplast inner membrane. Its function is as follows. Involved in protein precursor import into chloroplasts. May be part of an intermediate translocation complex acting as a protein-conducting channel at the inner envelope. This chain is Protein TIC 214, found in Daucus carota (Wild carrot).